The chain runs to 148 residues: UPF0756 membrane protein NMCC_1816 (148 aa).

Transmembrane regions (helical) follow at residues 13–35 (LILLGVVSNNNSITISATILLLM), 50–70 (HGLNLGIILLTIGVLSPLVSG), 80–100 (FLNFKMISAVFIGIFVAWLAG), and 121–141 (VIGVAFMGGIPVGPLIAAGIL).

The protein belongs to the UPF0756 family.

Its subcellular location is the cell membrane. This is UPF0756 membrane protein NMCC_1816 from Neisseria meningitidis serogroup C (strain 053442).